The primary structure comprises 492 residues: Osmoregulated proline transporter OpuE (492 aa).

Transmembrane regions (helical) follow at residues 3–23 (IEII…GWYA), 40–60 (LGPF…WMLM), 62–82 (VPGA…GLTI), 125–145 (IVSA…GMVS), 161–181 (GLFL…FLAV), 190–210 (AIMF…VGGV), 224–244 (LLDI…AWGL), 271–291 (IGMS…LIGV), 314–334 (ILFH…AIMS), 365–385 (LVMI…LLSL), 394–414 (LVGY…LLSL), 424–444 (ALAA…TGLA), and 449–469 (VYEI…VSMI).

This sequence belongs to the sodium:solute symporter (SSF) (TC 2.A.21) family.

Its subcellular location is the cell membrane. It catalyses the reaction L-proline(in) + Na(+)(in) = L-proline(out) + Na(+)(out). Its function is as follows. Catalyzes the uptake of extracellular proline under high-osmolarity growth conditions. Essential for the use of proline present in the environment as an osmoprotectant. This chain is Osmoregulated proline transporter OpuE, found in Bacillus subtilis (strain 168).